Reading from the N-terminus, the 417-residue chain is Serine hydroxymethyltransferase (417 aa).

(6S)-5,6,7,8-tetrahydrofolate is bound by residues L121 and 125–127 (GHL). K229 carries the post-translational modification N6-(pyridoxal phosphate)lysine. 355–357 (SPF) is a (6S)-5,6,7,8-tetrahydrofolate binding site.

It belongs to the SHMT family. In terms of assembly, homodimer. Pyridoxal 5'-phosphate serves as cofactor.

The protein localises to the cytoplasm. The enzyme catalyses (6R)-5,10-methylene-5,6,7,8-tetrahydrofolate + glycine + H2O = (6S)-5,6,7,8-tetrahydrofolate + L-serine. Its pathway is one-carbon metabolism; tetrahydrofolate interconversion. It participates in amino-acid biosynthesis; glycine biosynthesis; glycine from L-serine: step 1/1. Its function is as follows. Catalyzes the reversible interconversion of serine and glycine with tetrahydrofolate (THF) serving as the one-carbon carrier. This reaction serves as the major source of one-carbon groups required for the biosynthesis of purines, thymidylate, methionine, and other important biomolecules. Also exhibits THF-independent aldolase activity toward beta-hydroxyamino acids, producing glycine and aldehydes, via a retro-aldol mechanism. This chain is Serine hydroxymethyltransferase, found in Buchnera aphidicola subsp. Baizongia pistaciae (strain Bp).